The primary structure comprises 1591 residues: Dicer-like protein 1 (1591 aa).

Basic and acidic residues-rich tracts occupy residues 1 to 20 and 41 to 52; these read MEVHDGLKSPDKAAKSRYDD and SKPRKISERKRA. Residues 1–52 are disordered; sequence MEVHDGLKSPDKAAKSRYDDDRIDQDSEDEAVRLVANPDPSKPRKISERKRA. The 184-residue stretch at 115–298 folds into the Helicase ATP-binding domain; that stretch reads LFERAKQKNT…SYERATHELE (184 aa). ATP is bound at residue 128 to 135; sequence LDTGTGKT. Positions 242–245 match the DEAH box motif; sequence DEAH. Residues 439–607 form the Helicase C-terminal domain; the sequence is KLIEILAECF…CLSLPKDRIM (169 aa). The Dicer dsRNA-binding fold domain maps to 639–729; it reads SLVVLAEFVA…KSTLAKVLPA (91 aa). The PAZ domain maps to 888 to 1012; that stretch reads TTTDRVPYNF…LVLETLLISQ (125 aa). RNase III domains are found at residues 1050 to 1190 and 1243 to 1406; these read IDIA…LTAQ and CSQI…VDTG. Residues Glu1283, Asp1392, and Glu1395 each contribute to the Mg(2+) site. The DRBM domain occupies 1440-1514; that stretch reads THITSIITTQ…AKQAVAIYED (75 aa). Zn(2+) contacts are provided by Cys1452, His1485, Cys1526, and Cys1528.

The protein belongs to the helicase family. Dicer subfamily. Mg(2+) serves as cofactor. Mn(2+) is required as a cofactor.

Its function is as follows. Dicer-like endonuclease which seems not to be involved in cleaving double-stranded RNA in the RNA interference (RNAi) pathway, contrary to its DCL2 counterpart. The polypeptide is Dicer-like protein 1 (DCL1) (Pyricularia oryzae (strain 70-15 / ATCC MYA-4617 / FGSC 8958) (Rice blast fungus)).